The sequence spans 141 residues: Large ribosomal subunit protein uL11 (141 aa).

This sequence belongs to the universal ribosomal protein uL11 family. As to quaternary structure, part of the ribosomal stalk of the 50S ribosomal subunit. Interacts with L10 and the large rRNA to form the base of the stalk. L10 forms an elongated spine to which L12 dimers bind in a sequential fashion forming a multimeric L10(L12)X complex. One or more lysine residues are methylated.

In terms of biological role, forms part of the ribosomal stalk which helps the ribosome interact with GTP-bound translation factors. This Clostridium botulinum (strain Alaska E43 / Type E3) protein is Large ribosomal subunit protein uL11.